The primary structure comprises 385 residues: Sulfoquinovose monooxygenase (385 aa).

Residues 366–385 (AYGRVPSETPATPLGNGERH) form a disordered region.

Belongs to the SsuD family. In terms of assembly, homodimer.

It carries out the reaction 6-sulfo-D-quinovose + FMNH2 + O2 = 6-dehydro-D-glucose + FMN + sulfite + H2O + 2 H(+). In terms of biological role, part of the sulfoquinovose monooxygenase (sulfo-SMO) pathway, a D-sulfoquinovose degradation pathway that enables the complete utilization of all carbons within sulfoquinovose (SQ) with concomitant production of inorganic sulfite. Catalyzes the oxidative desulfurization of sulfoquinovose to sulfite and 6-dehydro-D-glucose. Is highly specific for sulfoquinovose and cannot use sulfoquinovosyl glycerol. FMNH(2) is provided by the FMN reductase SmoA. This chain is Sulfoquinovose monooxygenase, found in Agrobacterium fabrum (strain C58 / ATCC 33970) (Agrobacterium tumefaciens (strain C58)).